The primary structure comprises 376 residues: Glutamate 5-kinase (376 aa).

Residue lysine 18 participates in ATP binding. Substrate-binding residues include serine 58, aspartate 145, and asparagine 157. Residues 177–178 (SD) and 218–224 (TGGMASK) contribute to the ATP site. One can recognise a PUA domain in the interval 280-358 (TGALTLDAGA…SELPGELRRP (79 aa)).

This sequence belongs to the glutamate 5-kinase family.

The protein resides in the cytoplasm. It catalyses the reaction L-glutamate + ATP = L-glutamyl 5-phosphate + ADP. It functions in the pathway amino-acid biosynthesis; L-proline biosynthesis; L-glutamate 5-semialdehyde from L-glutamate: step 1/2. Functionally, catalyzes the transfer of a phosphate group to glutamate to form L-glutamate 5-phosphate. The chain is Glutamate 5-kinase from Mycobacterium tuberculosis (strain ATCC 25177 / H37Ra).